Consider the following 297-residue polypeptide: Pyrroline-5-carboxylate reductase 1 (297 aa).

The protein belongs to the pyrroline-5-carboxylate reductase family.

The protein localises to the cytoplasm. It carries out the reaction L-proline + NADP(+) = (S)-1-pyrroline-5-carboxylate + NADPH + 2 H(+). The catalysed reaction is L-proline + NAD(+) = (S)-1-pyrroline-5-carboxylate + NADH + 2 H(+). Its pathway is amino-acid biosynthesis; L-proline biosynthesis; L-proline from L-glutamate 5-semialdehyde: step 1/1. Catalyzes the reduction of 1-pyrroline-5-carboxylate (PCA) to L-proline. This Bacillus subtilis (strain 168) protein is Pyrroline-5-carboxylate reductase 1 (proH).